Here is a 294-residue protein sequence, read N- to C-terminus: NAD kinase (294 aa).

The active-site Proton acceptor is the aspartate 72. NAD(+) contacts are provided by residues 72–73 (DG), 146–147 (ND), arginine 157, arginine 174, aspartate 176, 187–192 (TAYSLS), and glutamine 247.

Belongs to the NAD kinase family. It depends on a divalent metal cation as a cofactor.

It is found in the cytoplasm. It carries out the reaction NAD(+) + ATP = ADP + NADP(+) + H(+). In terms of biological role, involved in the regulation of the intracellular balance of NAD and NADP, and is a key enzyme in the biosynthesis of NADP. Catalyzes specifically the phosphorylation on 2'-hydroxyl of the adenosine moiety of NAD to yield NADP. The sequence is that of NAD kinase from Marinobacter nauticus (strain ATCC 700491 / DSM 11845 / VT8) (Marinobacter aquaeolei).